The chain runs to 569 residues: uncharacterized protein (569 aa).

The N-terminal stretch at M1–A22 is a signal peptide. A disordered region spans residues R498 to G541. A compositionally biased stretch (low complexity) spans S505–S540.

It is found in the secreted. The protein resides in the cell surface. This is an uncharacterized protein from Schizosaccharomyces pombe (strain 972 / ATCC 24843) (Fission yeast).